We begin with the raw amino-acid sequence, 323 residues long: Replication factor C subunit 4 (323 aa).

ATP contacts are provided by residues valine 12, valine 24, 49–57, asparagine 145, and arginine 203; that span reads GMPGIGKTT.

It belongs to the activator 1 small subunits family. Replication factor C (RFC) is a heteropentamer of subunits RFC1, RFC2, RFC3, RFC4 and RFC5 and forms a complex with POL30/PCNA in the presence of ATP. Component of the RAD24-RFC complex which consists of RAD14, RFC2, RFC3, RFC4 and RFC5 and associates with the checkpoint clamp DDC1:MEC3:RAD17 complex. Component of the ELG1-RFC complex which consists of ELG1, RFC2, RFC3, RFC4 and RFC5. Component of the CTF18-RFC complex, which consists of CTF18, CTF8, DCC1, RFC2, RFC3, RFC4 and RFC5. RFC4 interacts with ECO1.

It is found in the nucleus. Component of ATP-dependent clamp loader (RFC and RFC-like) complexes for DNA clamps, such as the POL30/PCNA homotrimer and the checkpoint clamp DDC1:MEC3:RAD17 complex. During a clamp loading circle, the RFC:clamp complex binds to DNA and the recognition of the double-stranded/single-stranded junction stimulates ATP hydrolysis by RFC. The complex presumably provides bipartite ATP sites in which one subunit supplies a catalytic site for hydrolysis of ATP bound to the neighboring subunit. Dissociation of RFC from the clamp leaves the clamp encircling DNA. Component of the replication factor C (RFC or activator 1) complex which loads POL30/PCNA and acts during elongation of primed DNA templates by DNA polymerase delta and epsilon. RFC has an essential but redundant activity in sister chromatid cohesion establishment. Component of the RFC-like complex CTF18-RFC which is required for efficient establishment of chromosome cohesion during S-phase and may load or unload POL30/PCNA. Component of the RFC-like RAD24-RFC complex which loads the checkpoint clamp DDC1:MEC3:RAD17 complex and is involved in DNA repair pathways. Component of the RFC-like ELG1-RFC complex which appears to have a role in DNA replication, replication fork re-start, recombination and repair. This chain is Replication factor C subunit 4 (RFC4), found in Saccharomyces cerevisiae (strain ATCC 204508 / S288c) (Baker's yeast).